The sequence spans 300 residues: Protein MoxJ (300 aa).

Residues 1–25 (MSLVNGRRRTAASVVALTAALTALA) form the signal peptide.

It localises to the periplasm. Functionally, may be involved in the assemblage of active methanol dehydrogenase and/or its cofactor PQQ in the periplasm. The chain is Protein MoxJ (moxJ) from Methylorubrum extorquens (strain ATCC 14718 / DSM 1338 / JCM 2805 / NCIMB 9133 / AM1) (Methylobacterium extorquens).